A 438-amino-acid polypeptide reads, in one-letter code: Adenosylhomocysteinase (438 aa).

Residues T61, D137, and E162 each coordinate substrate. 163-165 (TTT) contacts NAD(+). Residues K192 and D196 each coordinate substrate. NAD(+)-binding positions include N197, 226–231 (GYGDVG), E249, N284, 305–307 (IGH), and N352.

It belongs to the adenosylhomocysteinase family. The cofactor is NAD(+).

Its subcellular location is the cytoplasm. The catalysed reaction is S-adenosyl-L-homocysteine + H2O = L-homocysteine + adenosine. It functions in the pathway amino-acid biosynthesis; L-homocysteine biosynthesis; L-homocysteine from S-adenosyl-L-homocysteine: step 1/1. Its function is as follows. May play a key role in the regulation of the intracellular concentration of adenosylhomocysteine. This Flavobacterium psychrophilum (strain ATCC 49511 / DSM 21280 / CIP 103535 / JIP02/86) protein is Adenosylhomocysteinase.